The following is a 256-amino-acid chain: Transcription factor CAULIFLOWER (256 aa).

Positions 1–61 constitute an MADS-box domain; that stretch reads MGRGRVQLKR…GKLFEYTSES (61 aa). A K-box domain is found at 90–180; the sequence is QPNWSMEYSR…TKQIKERENI (91 aa).

Homodimer capable of binding to CArG-box sequences.

It is found in the nucleus. Probable transcription factor that promotes early floral meristem identity in synergy with APETALA1, FRUITFULL and LEAFY. Is required subsequently for the transition of an inflorescence meristem into a floral meristem. Seems to be partially redundant to the function of APETALA1. In Arabidopsis lyrata subsp. lyrata (Lyre-leaved rock-cress), this protein is Transcription factor CAULIFLOWER (CAL).